We begin with the raw amino-acid sequence, 470 residues long: TNF receptor-associated factor 4 (470 aa).

The segment at 18-58 adopts an RING-type zinc-finger fold; the sequence is CPLCGKPMREPVQVSTCGHRFCDTCLQEFLSEGVFKCPEDQ. 3 consecutive TRAF-type zinc fingers follow at residues 101 to 154, 155 to 208, and 209 to 267; these read GHLN…EAYE, SHEG…DTIQ, and SHQY…LAMG. Lysine 263 participates in a covalent cross-link: Glycyl lysine isopeptide (Lys-Gly) (interchain with G-Cter in ubiquitin). Positions 277–310 form a coiled coil; that stretch reads HLAMMCALVSRQRQELQELRRELEELSIGSDGVL. The MATH domain maps to 307-462; the sequence is DGVLIWKIGS…DDAVFIRASV (156 aa). Phosphoserine is present on serine 426.

Belongs to the TNF receptor-associated factor family. B subfamily. As to quaternary structure, homotrimer. Interacts with LTBR/TNFRSF3, NGFR/TNFRSF16, RPS6KB1 and TGFB1I1. Interacts with SMURF1. Interacts (via TRAF domain) with MAP3K4 (via kinase domain). Interacts with NCF1, TICAM1, IRAK1 and TRAF6, and is probably part of a complex containing TRAF4, NCF1, TICAM1, IRAK1 and TRAF6. Interacts (via MATH domain) with GP6 and GP1BB. Interacts with EGFR (via C-terminal region); this interaction promotes the formation of EGFR asymmetric dimers. Interacts with PKM; this interaction promotes PKM kinase activity. In terms of processing, polyubiquitinated, leading to its proteasomal degradation. Ubiquitinated at Lys-263 by the SCF(FBXL2) complex, leading to its degradation by the proteasome. In terms of tissue distribution, predominantly expressed in brain. Preferentially expressed by postmitotic undifferentiated neurons in developing central (CNS) and peripheral (PNS) nervous system, and in nervous tissues of sensory organs. In the embryo, protein expression was shown in brain, thymus, salivary glands and intestine. In the adult, protein expression is restricted to the brain (hippocampus and olfactory bulb).

It localises to the cytoplasm. Its subcellular location is the nucleus. The protein resides in the perinuclear region. The protein localises to the cell junction. It is found in the tight junction. It localises to the cell membrane. Its subcellular location is the cytoskeleton. It catalyses the reaction S-ubiquitinyl-[E2 ubiquitin-conjugating enzyme]-L-cysteine + [acceptor protein]-L-lysine = [E2 ubiquitin-conjugating enzyme]-L-cysteine + N(6)-ubiquitinyl-[acceptor protein]-L-lysine.. The protein operates within protein degradation; proteasomal ubiquitin-dependent pathway. Its function is as follows. Adapter protein with E3 ligase activity that is involved in many diverse biological processes including cell proliferation, migration, differentiation, DNA repair, platelet activation or apoptosis. Promotes EGFR-mediated signaling by facilitating the dimerization of EGFR and downstream AKT activation thereby promoting cell proliferation. Ubiquitinates SMURF2 through 'Lys-48'-linked ubiquitin chain leading to SMURF2 degradation through the proteasome and subsequently osteogenic differentiation. Promotes 'Lys-63'-mediated ubiquitination of CHK1 which in turn activates cell cycle arrest and activation of DNA repair. In addition, promotes an atypical 'Lys-29'-linked ubiquitination at the C-terminal end of IRS1 which is crucial for insulin-like growth factor (IGF) signal transduction. Regulates activation of NF-kappa-B in response to signaling through Toll-like receptors. Required for normal skeleton development, and for normal development of the respiratory tract. Required for activation of RPS6KB1 in response to TNF signaling. Modulates TRAF6 functions. Inhibits adipogenic differentiation by activating pyruvate kinase PKM activity and subsequently the beta-catenin signaling pathway. This chain is TNF receptor-associated factor 4 (Traf4), found in Mus musculus (Mouse).